A 267-amino-acid chain; its full sequence is Thiazole synthase (267 aa).

The active-site Schiff-base intermediate with DXP is Lys107. Residues Gly168, 194–195 (AG), and 216–217 (NT) contribute to the 1-deoxy-D-xylulose 5-phosphate site.

This sequence belongs to the ThiG family. In terms of assembly, homotetramer. Forms heterodimers with either ThiH or ThiS.

The protein resides in the cytoplasm. The catalysed reaction is [ThiS sulfur-carrier protein]-C-terminal-Gly-aminoethanethioate + 2-iminoacetate + 1-deoxy-D-xylulose 5-phosphate = [ThiS sulfur-carrier protein]-C-terminal Gly-Gly + 2-[(2R,5Z)-2-carboxy-4-methylthiazol-5(2H)-ylidene]ethyl phosphate + 2 H2O + H(+). Its pathway is cofactor biosynthesis; thiamine diphosphate biosynthesis. Its function is as follows. Catalyzes the rearrangement of 1-deoxy-D-xylulose 5-phosphate (DXP) to produce the thiazole phosphate moiety of thiamine. Sulfur is provided by the thiocarboxylate moiety of the carrier protein ThiS. In vitro, sulfur can be provided by H(2)S. The chain is Thiazole synthase from Aquifex aeolicus (strain VF5).